The chain runs to 262 residues: Small ribosomal subunit protein eS1z (262 aa).

The segment covering 1-18 (MAVGKNKRISKGRKGGKK) has biased composition (basic residues). The interval 1 to 21 (MAVGKNKRISKGRKGGKKKAV) is disordered.

This sequence belongs to the eukaryotic ribosomal protein eS1 family. Component of the small ribosomal subunit. Mature ribosomes consist of a small (40S) and a large (60S) subunit. The 40S subunit contains about 33 different proteins and 1 molecule of RNA (18S). The 60S subunit contains about 49 different proteins and 3 molecules of RNA (25S, 5.8S and 5S).

The protein localises to the cytoplasm. The polypeptide is Small ribosomal subunit protein eS1z (Arabidopsis thaliana (Mouse-ear cress)).